Consider the following 357-residue polypeptide: Protein-glutamate methylesterase/protein-glutamine glutaminase (357 aa).

In terms of domain architecture, Response regulatory spans 3–120 (RVIVVDDSAF…LASMDLAALS (118 aa)). Residue D54 is modified to 4-aspartylphosphate. Positions 165–357 (ERSRRDIIAI…AERVASALYK (193 aa)) constitute a CheB-type methylesterase domain. Active-site residues include S177, H204, and D300.

This sequence belongs to the CheB family. Post-translationally, phosphorylated by CheA. Phosphorylation of the N-terminal regulatory domain activates the methylesterase activity.

The protein resides in the cytoplasm. The catalysed reaction is [protein]-L-glutamate 5-O-methyl ester + H2O = L-glutamyl-[protein] + methanol + H(+). It carries out the reaction L-glutaminyl-[protein] + H2O = L-glutamyl-[protein] + NH4(+). Its function is as follows. Involved in chemotaxis. Part of a chemotaxis signal transduction system that modulates chemotaxis in response to various stimuli. Catalyzes the demethylation of specific methylglutamate residues introduced into the chemoreceptors (methyl-accepting chemotaxis proteins or MCP) by CheR. Also mediates the irreversible deamidation of specific glutamine residues to glutamic acid. This Lawsonia intracellularis (strain PHE/MN1-00) protein is Protein-glutamate methylesterase/protein-glutamine glutaminase.